Consider the following 162-residue polypeptide: Allantoicase (162 aa).

This sequence belongs to the allantoicase family. As to quaternary structure, homohexamer. Expressed in zygote.

It carries out the reaction allantoate + H2O = (S)-ureidoglycolate + urea. It functions in the pathway nitrogen metabolism; (S)-allantoin degradation; (S)-ureidoglycolate from allantoate (aminidohydrolase route): step 1/1. Functionally, catalyzes the degradation of allantoate to (-)-ureidoglycolate and (+)-ureidoglycolate to glyoxylate. The chain is Allantoicase from Chlamydomonas reinhardtii (Chlamydomonas smithii).